The primary structure comprises 1502 residues: E3 ubiquitin-protein ligase UPL4 (1502 aa).

Residues 1-21 show a composition bias toward basic and acidic residues; that stretch reads MENRGQKRMEVVEELPADKRA. Residues 1 to 107 form a disordered region; it reads MENRGQKRME…DYQRQRSSGD (107 aa). Over residues 22 to 46 the composition is skewed to polar residues; it reads CNSQDFRPSTSGSSVQAQANDTNPG. The segment covering 67–90 has biased composition (acidic residues); that stretch reads DEEEQEEQDKEDSDYGSCDSDEED. A compositionally biased stretch (basic and acidic residues) spans 91 to 107; the sequence is PRQRVLQDYQRQRSSGD. ARM repeat units follow at residues 143–183, 186–226, 228–265, and 267–306; these read EESL…YLCD, PPSV…KISR, EPVA…NICK, and LSSE…KIAD. The tract at residues 833-881 is disordered; it reads CQAESSSPMEIDSESSDASQLQGSQVEDQTQLPGQQNASSSETSSEKED. Polar residues predominate over residues 849 to 875; the sequence is DASQLQGSQVEDQTQLPGQQNASSSET. Positions 1022-1096 are K-box; the sequence is RPVPHSEFVS…IRHHPQHLSS (75 aa). The HECT domain occupies 1128-1502; the sequence is KMMELYGNQK…TEGQGSFHLS (375 aa). The Glycyl thioester intermediate role is filled by Cys-1469.

The protein belongs to the UPL family. K-HECT subfamily.

The catalysed reaction is S-ubiquitinyl-[E2 ubiquitin-conjugating enzyme]-L-cysteine + [acceptor protein]-L-lysine = [E2 ubiquitin-conjugating enzyme]-L-cysteine + N(6)-ubiquitinyl-[acceptor protein]-L-lysine.. Its pathway is protein modification; protein ubiquitination. In terms of biological role, probable E3 ubiquitin-protein ligase which mediates ubiquitination and subsequent proteasomal degradation of target proteins. The polypeptide is E3 ubiquitin-protein ligase UPL4 (UPL4) (Arabidopsis thaliana (Mouse-ear cress)).